The following is a 483-amino-acid chain: Glutamyl-tRNA(Gln) amidotransferase subunit A (483 aa).

Residues K76 and S151 each act as charge relay system in the active site. S175 acts as the Acyl-ester intermediate in catalysis.

This sequence belongs to the amidase family. GatA subfamily. As to quaternary structure, heterotrimer of A, B and C subunits.

The enzyme catalyses L-glutamyl-tRNA(Gln) + L-glutamine + ATP + H2O = L-glutaminyl-tRNA(Gln) + L-glutamate + ADP + phosphate + H(+). In terms of biological role, allows the formation of correctly charged Gln-tRNA(Gln) through the transamidation of misacylated Glu-tRNA(Gln) in organisms which lack glutaminyl-tRNA synthetase. The reaction takes place in the presence of glutamine and ATP through an activated gamma-phospho-Glu-tRNA(Gln). The chain is Glutamyl-tRNA(Gln) amidotransferase subunit A from Coxiella burnetii (strain CbuK_Q154) (Coxiella burnetii (strain Q154)).